Here is a 221-residue protein sequence, read N- to C-terminus: tRNA (guanine-N(7)-)-methyltransferase (221 aa).

S-adenosyl-L-methionine-binding residues include glutamate 46, aspartate 71, and aspartate 120. The active site involves aspartate 120. Aspartate 156 provides a ligand contact to substrate.

It belongs to the class I-like SAM-binding methyltransferase superfamily. TrmB family.

It carries out the reaction guanosine(46) in tRNA + S-adenosyl-L-methionine = N(7)-methylguanosine(46) in tRNA + S-adenosyl-L-homocysteine. The protein operates within tRNA modification; N(7)-methylguanine-tRNA biosynthesis. Functionally, catalyzes the formation of N(7)-methylguanine at position 46 (m7G46) in tRNA. In Cytophaga hutchinsonii (strain ATCC 33406 / DSM 1761 / CIP 103989 / NBRC 15051 / NCIMB 9469 / D465), this protein is tRNA (guanine-N(7)-)-methyltransferase.